A 242-amino-acid polypeptide reads, in one-letter code: DNA repair protein RecO (242 aa).

The protein belongs to the RecO family. Monomer.

Involved in DNA repair and RecF pathway recombination. This chain is DNA repair protein RecO, found in Shigella flexneri serotype 5b (strain 8401).